The primary structure comprises 186 residues: MGLKADNWIRKMALEHKMIEPFCEANIGKGVVSYGLSSYGYDIRVGREFKIFTNVNSTVVDPKNFVEENVVDFEGDVCIVPANSFTLARTIEYFKMPDDVLAICLGKSTYARCGIIVNVTPFEPGFEGHITIEISNTTPLPAKIYANEGIAQVLFLQGDEKCDTTYKDKKGKYQAQTGITLPRILK.

Residue Lys-107–Arg-112 participates in dCTP binding. The active-site Proton donor/acceptor is Glu-133. 3 residues coordinate dCTP: Gln-152, Tyr-166, and Gln-176.

This sequence belongs to the dCTP deaminase family. As to quaternary structure, homotrimer.

It carries out the reaction dCTP + H2O + H(+) = dUTP + NH4(+). Its pathway is pyrimidine metabolism; dUMP biosynthesis; dUMP from dCTP (dUTP route): step 1/2. Its function is as follows. Catalyzes the deamination of dCTP to dUTP. The sequence is that of dCTP deaminase from Campylobacter jejuni (strain RM1221).